The primary structure comprises 500 residues: Oryzalexin D synthase (500 aa).

Residues 4 to 24 (SQMWLLWGALSVALFFYFSTL) traverse the membrane as a helical segment. C442 contacts heme.

The protein belongs to the cytochrome P450 family. Heme is required as a cofactor.

The protein localises to the membrane. It catalyses the reaction ent-cassa-12,15-diene + reduced [NADPH--hemoprotein reductase] + O2 = ent-11beta-hydroxycassa-12,15-diene + oxidized [NADPH--hemoprotein reductase] + H2O + H(+). The catalysed reaction is ent-sandaracopimaradien-3beta-ol + reduced [NADPH--hemoprotein reductase] + O2 = oryzalexin D + oxidized [NADPH--hemoprotein reductase] + H2O + H(+). Functionally, enzyme of the diterpenoid metabolism involved in the biosynthesis of both phytocassane and the oryzalexin class of phytoalexins. Can hydroxylate syn-pimaradiene, ent-pimaradiene, ent-sandaracopimaradiene, ent-isokaurene, ent-kaurene, and ent-cassadiene, but no activity with syn-stemodene, syn-stemarene, syn-labdatriene, C11-alpha-hydroxy-ent-cassadiene or syn-pimadien-19-oic acid as substrates. Hydroxylates 3-alpha-hydroxy-ent-sandaracopimaradiene at C-7-beta, resulting in a 3-alpha,7-beta-diol corresponding to oryzalexins D. In Oryza sativa subsp. japonica (Rice), this protein is Oryzalexin D synthase.